The sequence spans 437 residues: MEIGCITISHKNAKVEEIEKIWLTVKPRLEDVISKCSFSEYAYIFTCNRFEIYLVGENLKSCLQDIAEELGITGKAEIFVGESCLRHLLRVASGIESMIVGEEQILGQVRQCFNLCREGGQAGEVLERVFGKAVQVGRRVRRETAISKGSVSIGSAAVEVAERVLGTLKGKKALLVGAGEMGTLVAKAIAGKEVEAVLIANRTYEKAEELAKRIGGVAVKFDKLVDYLKVCDVVISATSAPHAVITRGDVERAMRERSQKLLIIDIALPRDVDESVAQLDGVELLTIDDLRRISEENLARRREEIAKVEGIIEEELEQLKLLLKDISARDAIAAMYSLAERFVGEEVEELYAKLNARYGVSEDVKEILNDFANSLIKKFLREPTVRLREAARKDEFHVIESIKYVFGDGNGRVSEGKDAKVEEGKPEVDVQRSKAES.

Substrate contacts are provided by residues 46 to 49, S97, 102 to 104, and Q108; these read TCNR and EEQ. The active-site Nucleophile is C47. Residue 177 to 182 participates in NADP(+) binding; the sequence is GAGEMG. Residues 410–437 form a disordered region; it reads NGRVSEGKDAKVEEGKPEVDVQRSKAES. Basic and acidic residues predominate over residues 414–437; the sequence is SEGKDAKVEEGKPEVDVQRSKAES.

The protein belongs to the glutamyl-tRNA reductase family. Homodimer.

It catalyses the reaction (S)-4-amino-5-oxopentanoate + tRNA(Glu) + NADP(+) = L-glutamyl-tRNA(Glu) + NADPH + H(+). It participates in porphyrin-containing compound metabolism; protoporphyrin-IX biosynthesis; 5-aminolevulinate from L-glutamyl-tRNA(Glu): step 1/2. Catalyzes the NADPH-dependent reduction of glutamyl-tRNA(Glu) to glutamate 1-semialdehyde (GSA). This chain is Glutamyl-tRNA reductase, found in Archaeoglobus fulgidus (strain ATCC 49558 / DSM 4304 / JCM 9628 / NBRC 100126 / VC-16).